The primary structure comprises 179 residues: 3-hydroxyanthranilate 3,4-dioxygenase (179 aa).

Arg-47 provides a ligand contact to O2. Residues His-51, Glu-57, and His-96 each coordinate Fe cation. A substrate-binding site is contributed by Glu-57. Substrate contacts are provided by Arg-100 and Glu-110. Residues Cys-125, Cys-128, Cys-162, and Cys-165 each coordinate Fe cation.

It belongs to the 3-HAO family. It depends on Fe(2+) as a cofactor.

The catalysed reaction is 3-hydroxyanthranilate + O2 = (2Z,4Z)-2-amino-3-carboxymuconate 6-semialdehyde. It functions in the pathway cofactor biosynthesis; NAD(+) biosynthesis; quinolinate from L-kynurenine: step 3/3. Its function is as follows. Catalyzes the oxidative ring opening of 3-hydroxyanthranilate to 2-amino-3-carboxymuconate semialdehyde, which spontaneously cyclizes to quinolinate. The sequence is that of 3-hydroxyanthranilate 3,4-dioxygenase from Bacillus thuringiensis (strain Al Hakam).